A 429-amino-acid polypeptide reads, in one-letter code: 3-phosphoshikimate 1-carboxyvinyltransferase (429 aa).

3-phosphoshikimate-binding residues include Lys20, Ser21, and Arg25. Lys20 is a binding site for phosphoenolpyruvate. The phosphoenolpyruvate site is built by Gly89 and Arg118. Residues Ser164, Ser165, Gln166, Ser192, Asp311, and Lys338 each contribute to the 3-phosphoshikimate site. Phosphoenolpyruvate is bound at residue Gln166. Asp311 (proton acceptor) is an active-site residue. The phosphoenolpyruvate site is built by Arg342 and Arg384.

Belongs to the EPSP synthase family. As to quaternary structure, monomer.

It localises to the cytoplasm. The catalysed reaction is 3-phosphoshikimate + phosphoenolpyruvate = 5-O-(1-carboxyvinyl)-3-phosphoshikimate + phosphate. It functions in the pathway metabolic intermediate biosynthesis; chorismate biosynthesis. Its function is as follows. Catalyzes the transfer of the enolpyruvyl moiety of phosphoenolpyruvate (PEP) to the 5-hydroxyl of shikimate-3-phosphate (S3P) to produce enolpyruvyl shikimate-3-phosphate and inorganic phosphate. This is 3-phosphoshikimate 1-carboxyvinyltransferase from Methanococcus vannielii (strain ATCC 35089 / DSM 1224 / JCM 13029 / OCM 148 / SB).